The primary structure comprises 290 residues: Small ribosomal subunit protein uS2 (290 aa).

The disordered stretch occupies residues 269-290; it reads WEAEASGDWAAESAQPNPETKW.

The protein belongs to the universal ribosomal protein uS2 family. As to quaternary structure, component of the small ribosomal subunit. Mature ribosomes consist of a small (40S) and a large (60S) subunit. The 40S subunit contains about 33 different proteins and 1 molecule of RNA (18S). The 60S subunit contains about 49 different proteins and 3 molecules of RNA (25S, 5.8S and 5S). Interacts with rps21.

Its subcellular location is the cytoplasm. In terms of biological role, required for the assembly and/or stability of the 40S ribosomal subunit. Required for the processing of the 20S rRNA-precursor to mature 18S rRNA in a late step of the maturation of 40S ribosomal subunits. This chain is Small ribosomal subunit protein uS2 (rps0), found in Talaromyces marneffei (strain ATCC 18224 / CBS 334.59 / QM 7333) (Penicillium marneffei).